Reading from the N-terminus, the 137-residue chain is Nucleoside diphosphate kinase (137 aa).

The ATP site is built by Lys11, Phe59, Arg87, Thr93, Arg104, and Asn114. The active-site Pros-phosphohistidine intermediate is His117.

It belongs to the NDK family. Homotetramer. Mg(2+) is required as a cofactor.

The protein resides in the cytoplasm. It catalyses the reaction a 2'-deoxyribonucleoside 5'-diphosphate + ATP = a 2'-deoxyribonucleoside 5'-triphosphate + ADP. It carries out the reaction a ribonucleoside 5'-diphosphate + ATP = a ribonucleoside 5'-triphosphate + ADP. Major role in the synthesis of nucleoside triphosphates other than ATP. The ATP gamma phosphate is transferred to the NDP beta phosphate via a ping-pong mechanism, using a phosphorylated active-site intermediate. In Frankia alni (strain DSM 45986 / CECT 9034 / ACN14a), this protein is Nucleoside diphosphate kinase.